We begin with the raw amino-acid sequence, 561 residues long: Mercuric reductase (561 aa).

The HMA domain maps to 2–65; that stretch reads THLKITGMTC…AVAGLGYKAT (64 aa). Cysteine 11 and cysteine 14 together coordinate a metal cation. 3 residues coordinate FAD: alanine 110, glycine 130, and threonine 135. A disulfide bridge connects residues cysteine 136 and cysteine 141. 4 residues coordinate FAD: lysine 145, alanine 211, aspartate 403, and valine 411. Hg(2+) is bound by residues cysteine 558 and cysteine 559.

The protein belongs to the class-I pyridine nucleotide-disulfide oxidoreductase family. In terms of assembly, homodimer. FAD serves as cofactor.

It carries out the reaction Hg + NADP(+) + H(+) = Hg(2+) + NADPH. Its function is as follows. Resistance to Hg(2+) in bacteria appears to be governed by a specialized system which includes mercuric reductase. MerA protein is responsible for volatilizing mercury as Hg(0). Plays a pivotal role in mercury resistance under thiol-depleted conditions and cell protection. Protects cells under thiol-depleted conditions. This chain is Mercuric reductase (merA), found in Pseudomonas aeruginosa.